A 24-amino-acid chain; its full sequence is Arginine attenuator peptide (24 aa).

This sequence belongs to the arginine attenuator peptide family.

Arginine attenuator peptide (AAP) that has a regulatory role in the production of arginine-specific carbamoyl phosphate synthetase. Encoded by an upstream open reading frame (uORF) within the 5'-leader region of arginine-specific carbamoyl phosphate synthetase small chain (arg-2) mRNA, it attenuates the translation of the downstream arg-2 ORF. In the presence of high concentrations of arginine, ribosomes translating the uORF encoding AAP stall at the termination codon, resulting in reduced translation from the downstream arg-2 initiation codon. The chain is Arginine attenuator peptide from Neurospora crassa (strain ATCC 24698 / 74-OR23-1A / CBS 708.71 / DSM 1257 / FGSC 987).